The chain runs to 164 residues: IQ domain-containing protein F2 (164 aa).

IQ domains are found at residues 43–72 and 99–128; these read RTKA…RAWI and RERA…AIYI.

This Homo sapiens (Human) protein is IQ domain-containing protein F2 (IQCF2).